Here is a 338-residue protein sequence, read N- to C-terminus: RNA 3'-terminal phosphate cyclase (338 aa).

ATP-binding positions include Gln103 and 283 to 287 (YLADQ). Catalysis depends on His308, which acts as the Tele-AMP-histidine intermediate.

This sequence belongs to the RNA 3'-terminal cyclase family. Type 1 subfamily.

It is found in the cytoplasm. The catalysed reaction is a 3'-end 3'-phospho-ribonucleotide-RNA + ATP = a 3'-end 2',3'-cyclophospho-ribonucleotide-RNA + AMP + diphosphate. Its function is as follows. Catalyzes the conversion of 3'-phosphate to a 2',3'-cyclic phosphodiester at the end of RNA. The mechanism of action of the enzyme occurs in 3 steps: (A) adenylation of the enzyme by ATP; (B) transfer of adenylate to an RNA-N3'P to produce RNA-N3'PP5'A; (C) and attack of the adjacent 2'-hydroxyl on the 3'-phosphorus in the diester linkage to produce the cyclic end product. The biological role of this enzyme is unknown but it is likely to function in some aspects of cellular RNA processing. The polypeptide is RNA 3'-terminal phosphate cyclase (Escherichia coli O81 (strain ED1a)).